A 171-amino-acid chain; its full sequence is NRR repressor homolog 2 (171 aa).

Residues 1–12 (MEARLSTGEKTK) show a composition bias toward basic and acidic residues. 3 disordered regions span residues 1-45 (MEAR…QQQM), 65-94 (AALP…APWR), and 119-143 (TTKG…EEDK). The segment covering 26-43 (PEEETAAETTTSEEEEQQ) has biased composition (acidic residues).

This sequence belongs to the NPR1-interactor family. Interacts with NPR1/NH1. Interacts with NPR3/NH3.

The protein localises to the nucleus. Binds to and weakly represses NPR1/NH1-mediated transcriptional activation of LG2 in vitro. The sequence is that of NRR repressor homolog 2 from Oryza sativa subsp. japonica (Rice).